The primary structure comprises 121 residues: MAILTDENYVDKAERAISLLEKDNKGNYLLTTSQIRKLLSLCSSLYDRSKERKFDELINDVSYLRVQFVYQAGREIAVKDLIEKAQILEALKEIKDRETLQRFCRYMEALVAYFKFYGGKD.

This sequence belongs to the CRISPR-associated Csm2 family. As to quaternary structure, part of the Csm effector complex that includes at least Cas10(1), Csm2(3), Csm3(5), Csm4(1), Csm5(1) and mature crRNA. The Csm complex is elongated and slightly twisted with a maximal length of 215 Angstroms and a diameter of 75-80 Angstroms. It has been modeled to have a central protein filamant of Csm3 subunits along which the dsRNA helix of paired crRNA and target RNA binds. The filament is capped at one end by Cas10 and Csm4 and at the other end by Csm5; ssDNA is thought to bind to the N-terminal HD domain of Cas10. Csm with a precursor crRNA does not include Csm5, while Cas6, the enzyme probably involved in pre-crRNA processing, is found associated with a subset of the Csm complex.

Functionally, CRISPR (clustered regularly interspaced short palindromic repeat) is an adaptive immune system that provides protection against mobile genetic elements (viruses, transposable elements and conjugative plasmids). CRISPR clusters contain spacers, sequences complementary to antecedent mobile elements, and target invading nucleic acids. CRISPR clusters are transcribed and processed into CRISPR RNA (crRNA). The type III-A Csm effector complex binds crRNA and acts as a crRNA-guided RNase, DNase and cyclic oligoadenylate synthase; binding of target RNA cognate to the crRNA is required for all activities. In a heterologous host this Csm effector complex restricts ssRNA phage MS2, suggesting it may target RNA viruses in vivo. Csm functions as a non-specific ssDNase. Base-pairing between crRNA and target RNA to form a ternary Csm complex activates a ssDNase activity; target RNA cleavage suppresses the ssDNase, a temporal control that prevents uncontrolled DNA degradation. Viral RNA transcripts probably tether the Csm complex to the viral genome, recruiting Cas10 ssDNA activity which is able to degrade DNA in the transcription bubble, spatially controlling the DNase activity. In terms of biological role, this subunit may be involved in monitoring complementarity of crRNA and target RNA. The polypeptide is CRISPR system Cms protein Csm2 (Streptococcus thermophilus).